Here is a 226-residue protein sequence, read N- to C-terminus: Biosynthetic peptidoglycan transglycosylase (226 aa).

The helical transmembrane segment at 5–25 (IGVTVLAVVGLLLLPYLLTPL) threads the bilayer.

Belongs to the glycosyltransferase 51 family.

It is found in the cell inner membrane. It carries out the reaction [GlcNAc-(1-&gt;4)-Mur2Ac(oyl-L-Ala-gamma-D-Glu-L-Lys-D-Ala-D-Ala)](n)-di-trans,octa-cis-undecaprenyl diphosphate + beta-D-GlcNAc-(1-&gt;4)-Mur2Ac(oyl-L-Ala-gamma-D-Glu-L-Lys-D-Ala-D-Ala)-di-trans,octa-cis-undecaprenyl diphosphate = [GlcNAc-(1-&gt;4)-Mur2Ac(oyl-L-Ala-gamma-D-Glu-L-Lys-D-Ala-D-Ala)](n+1)-di-trans,octa-cis-undecaprenyl diphosphate + di-trans,octa-cis-undecaprenyl diphosphate + H(+). Its pathway is cell wall biogenesis; peptidoglycan biosynthesis. Functionally, peptidoglycan polymerase that catalyzes glycan chain elongation from lipid-linked precursors. The protein is Biosynthetic peptidoglycan transglycosylase of Nitrobacter hamburgensis (strain DSM 10229 / NCIMB 13809 / X14).